Here is a 52-residue protein sequence, read N- to C-terminus: Metallothionein-2 (52 aa).

2 repeats span residues 43-47 (QTCKC) and 48-52 (QTCKC).

This sequence belongs to the metallothionein superfamily. Type 10 family.

Its function is as follows. The metallothioneins are involved in the cellular sequestration of toxic metal ions. In Candida glabrata (strain ATCC 2001 / BCRC 20586 / JCM 3761 / NBRC 0622 / NRRL Y-65 / CBS 138) (Yeast), this protein is Metallothionein-2 (MT-II).